A 160-amino-acid chain; its full sequence is Transcription elongation factor GreA (160 aa).

Residues M1 to R72 are a coiled coil.

It belongs to the GreA/GreB family.

In terms of biological role, necessary for efficient RNA polymerase transcription elongation past template-encoded arresting sites. The arresting sites in DNA have the property of trapping a certain fraction of elongating RNA polymerases that pass through, resulting in locked ternary complexes. Cleavage of the nascent transcript by cleavage factors such as GreA or GreB allows the resumption of elongation from the new 3'terminus. GreA releases sequences of 2 to 3 nucleotides. This Streptococcus gordonii (strain Challis / ATCC 35105 / BCRC 15272 / CH1 / DL1 / V288) protein is Transcription elongation factor GreA.